The chain runs to 1706 residues: PR domain zinc finger protein 2 (1706 aa).

The SET domain maps to 27–140 (EEVRLFPSAV…PGEELLVWYN (114 aa)). Positions 154 to 342 (ERASARSKRS…TPPPHTPRAR (189 aa)) are disordered. Residues 158–183 (ARSKRSSPKSRRGKKKSHENKNKGIR) are compositionally biased toward basic residues. Over residues 185-199 (HPTQLKASELDSTFA) the composition is skewed to polar residues. Acidic residues predominate over residues 258-294 (TDCEVNDVEEEELEEEEELEEEEEEELGEDGVEEADM). Residues 299-313 (SAKEPEIRCEEKPED) are compositionally biased toward basic and acidic residues. C2H2-type zinc fingers lie at residues 355-377 (FPCQ…MHIH) and 385-407 (FKCK…ERRH). Disordered regions lie at residues 400–446 (RRRH…QLGQ), 492–542 (RRHQ…EEEG), and 618–655 (LLKD…STAP). Ser-416 is subject to Phosphoserine. A compositionally biased stretch (basic and acidic residues) spans 427–439 (DGKGENVTSKDES). The segment at 476-499 (HPCKYCKKVFGTHTNMRRHQRRVH) adopts a C2H2-type 3 zinc-finger fold. Ser-637 carries the post-translational modification Phosphoserine. Glycyl lysine isopeptide (Lys-Gly) (interchain with G-Cter in SUMO2) cross-links involve residues Lys-645, Lys-684, and Lys-686. Disordered regions lie at residues 724–794 (TSSR…SPPC), 823–1075 (SGVK…SSVV), and 1088–1112 (VTFK…AGGQ). Residues 733-743 (SSPPSSPQHSP) show a composition bias toward low complexity. Ser-738 carries the post-translational modification Phosphoserine. Lys-769 participates in a covalent cross-link: Glycyl lysine isopeptide (Lys-Gly) (interchain with G-Cter in SUMO2). Ser-776, Ser-780, and Ser-791 each carry phosphoserine. Positions 823 to 832 (SGVKQKSEGT) are enriched in polar residues. Positions 846–863 (SVHKKPCDSEGKEFKENH) are enriched in basic and acidic residues. Glycyl lysine isopeptide (Lys-Gly) (interchain with G-Cter in SUMO2) cross-links involve residues Lys-860 and Lys-870. 2 stretches are compositionally biased toward polar residues: residues 891 to 912 (SLPT…SPDT) and 943 to 952 (LQTASLSSGQ). Over residues 962–983 (PSSPPPCPPVLTVATPPPPLLP) the composition is skewed to pro residues. Positions 993–1009 (DASPQQCPSPFSNTTAQ) are enriched in polar residues. Over residues 1010 to 1019 (SPLPILSPTV) the composition is skewed to low complexity. Positions 1020–1030 (SPSPSPIPPVE) are enriched in pro residues. The segment covering 1034–1062 (SAASPGPPTLSSSSSSSSSFPSSSCSSTS) has biased composition (low complexity). Residues 1091–1106 (KQEESESEGLKPKEEA) are compositionally biased toward basic and acidic residues. 3 consecutive C2H2-type zinc fingers follow at residues 1123–1145 (FICN…LSVH), 1151–1174 (FKCE…FLLH), and 1180–1203 (FVCS…RDLH). Glycyl lysine isopeptide (Lys-Gly) (interchain with G-Cter in SUMO2) cross-links involve residues Lys-1136 and Lys-1140. Residues 1218 to 1227 (LRPQNFTDPS) are compositionally biased toward polar residues. Residues 1218 to 1251 (LRPQNFTDPSKANVEHMPSLPEEPLETSREEELN) form a disordered region. Residue Lys-1269 forms a Glycyl lysine isopeptide (Lys-Gly) (interchain with G-Cter in SUMO2) linkage. The C2H2-type 7; atypical zinc finger occupies 1321–1343 (IRCTKCGKGVDNMPELHKHILAC). A C2H2-type 8; atypical zinc finger spans residues 1443-1465 (HICPYCDREFTYIGSLNKHAAFS). Residues 1466–1563 (CPKKPLSPSK…KKASSSSLRN (98 aa)) are disordered. Basic residues predominate over residues 1474–1486 (SKRKVSHSSKKGG). Low complexity predominate over residues 1487–1498 (HASSSSSDRNSS). A compositionally biased stretch (polar residues) spans 1528 to 1544 (GPAQASLPSSSFRSRQN). The segment covering 1548–1563 (AASVKSKKASSSSLRN) has biased composition (low complexity).

It belongs to the class V-like SAM-binding methyltransferase superfamily. Binds to the retinoblastoma protein (RB). Interacts with GATA3.

The protein localises to the nucleus. It carries out the reaction L-lysyl-[histone] + S-adenosyl-L-methionine = N(6)-methyl-L-lysyl-[histone] + S-adenosyl-L-homocysteine + H(+). It catalyses the reaction L-lysyl(9)-[histone H3] + 3 S-adenosyl-L-methionine = N(6),N(6),N(6)-trimethyl-L-lysyl(9)-[histone H3] + 3 S-adenosyl-L-homocysteine + 3 H(+). In terms of biological role, S-adenosyl-L-methionine-dependent histone methyltransferase that specifically methylates 'Lys-9' of histone H3. May function as a DNA-binding transcription factor. Binds to the macrophage-specific TPA-responsive element (MTE) of the HMOX1 (heme oxygenase 1) gene and may act as a transcriptional activator of this gene. In Rattus norvegicus (Rat), this protein is PR domain zinc finger protein 2 (Prdm2).